Consider the following 585-residue polypeptide: Arginine--tRNA ligase (585 aa).

The short motif at 131–141 is the 'HIGH' region element; sequence ANPTGPMHVGH.

Belongs to the class-I aminoacyl-tRNA synthetase family. In terms of assembly, monomer.

The protein resides in the cytoplasm. It catalyses the reaction tRNA(Arg) + L-arginine + ATP = L-arginyl-tRNA(Arg) + AMP + diphosphate. In Chelativorans sp. (strain BNC1), this protein is Arginine--tRNA ligase.